The following is a 272-amino-acid chain: Ribosomal RNA small subunit methyltransferase A (272 aa).

Asparagine 18, leucine 20, glycine 45, glutamate 66, aspartate 91, and asparagine 113 together coordinate S-adenosyl-L-methionine.

Belongs to the class I-like SAM-binding methyltransferase superfamily. rRNA adenine N(6)-methyltransferase family. RsmA subfamily.

Its subcellular location is the cytoplasm. The enzyme catalyses adenosine(1518)/adenosine(1519) in 16S rRNA + 4 S-adenosyl-L-methionine = N(6)-dimethyladenosine(1518)/N(6)-dimethyladenosine(1519) in 16S rRNA + 4 S-adenosyl-L-homocysteine + 4 H(+). Functionally, specifically dimethylates two adjacent adenosines (A1518 and A1519) in the loop of a conserved hairpin near the 3'-end of 16S rRNA in the 30S particle. May play a critical role in biogenesis of 30S subunits. This chain is Ribosomal RNA small subunit methyltransferase A, found in Proteus mirabilis (strain HI4320).